A 547-amino-acid chain; its full sequence is Glucose-6-phosphate isomerase (547 aa).

Glu351 acts as the Proton donor in catalysis. Residues His382 and Lys509 contribute to the active site.

Belongs to the GPI family.

The protein resides in the cytoplasm. It catalyses the reaction alpha-D-glucose 6-phosphate = beta-D-fructose 6-phosphate. The protein operates within carbohydrate biosynthesis; gluconeogenesis. Its pathway is carbohydrate degradation; glycolysis; D-glyceraldehyde 3-phosphate and glycerone phosphate from D-glucose: step 2/4. In terms of biological role, catalyzes the reversible isomerization of glucose-6-phosphate to fructose-6-phosphate. This is Glucose-6-phosphate isomerase from Coxiella burnetii (strain CbuG_Q212) (Coxiella burnetii (strain Q212)).